A 396-amino-acid chain; its full sequence is L-cysteine desulfidase (396 aa).

The Proton acceptor role is filled by cysteine 23. The [4Fe-4S] cluster site is built by cysteine 287, cysteine 329, and cysteine 336.

Belongs to the L-cysteine desulfidase family. As to quaternary structure, homotrimer. Requires [4Fe-4S] cluster as cofactor.

It catalyses the reaction L-cysteine + H2O = hydrogen sulfide + pyruvate + NH4(+) + H(+). In terms of biological role, catalyzes the cleavage of L-cysteine to form 2-aminoprop-2-enoate and sulfide. The former then spontaneously hydrolyzes to pyruvate and NH(3). May be responsible for the production of sulfide required for the biosynthesis of iron-sulfur centers in this archaea. This Methanococcus maripaludis (strain DSM 14266 / JCM 13030 / NBRC 101832 / S2 / LL) protein is L-cysteine desulfidase.